Reading from the N-terminus, the 544-residue chain is Glycoprotein gp100 (544 aa).

Positions 1 to 19 are cleaved as a signal peptide; sequence MKNFILLVFLFLLVSNSLG. The Extracellular portion of the chain corresponds to 20–489; the sequence is KSNKKDDQSP…SGGGGNKKLY (470 aa). The N-linked (GlcNAc...) asparagine glycan is linked to N80. Over residues 84 to 99 the composition is skewed to polar residues; that stretch reads EPQNNPIPTVSINPDQ. The disordered stretch occupies residues 84 to 215; sequence EPQNNPIPTV…TPTRPSSSVS (132 aa). Composition is skewed to low complexity over residues 126 to 142, 150 to 165, and 189 to 199; these read SKPT…TIPP, PQTT…TPTP, and PKPTKSSKPTK. 8 N-linked (GlcNAc...) asparagine glycosylation sites follow: N224, N308, N332, N366, N380, N410, N422, and N478. Positions 444-480 are disordered; sequence KPSTTDDDNNKNNDDGDSEIDSVGKSAVDSSKSNNNS. The helical transmembrane segment at 490-510 threads the bilayer; sequence LLIILPTVLFIIVAALVAIFI. Residues 511–544 lie on the Cytoplasmic side of the membrane; it reads KTRVSQNSGSKVNKNNNKKDSINVPFQMLDEITT.

In terms of processing, N- and O-glycosylated.

Its subcellular location is the membrane. This Dictyostelium discoideum (Social amoeba) protein is Glycoprotein gp100 (gppA).